A 355-amino-acid polypeptide reads, in one-letter code: uncharacterized protein (355 aa).

The N-terminal stretch at 1–22 (MRLTHVTACICLLVAVAVLFSG) is a signal peptide.

The protein belongs to the bacterial solute-binding protein 1 family. WtpA subfamily.

This is an uncharacterized protein from Methanoculleus marisnigri (strain ATCC 35101 / DSM 1498 / JR1).